Consider the following 291-residue polypeptide: MHGILSIQSHVTYGHAGNSSAIFPMQRMGFEVWPIHTVQFSNHTQYKQGWTGRAFSASDIDELVQGLDNIDALKRCKAILTGYQGSAEQCEAIIRTVEKVKAQNPSSLYICDPVMGAPDKGCIVAPGITEYLVDHLMPMADVIVPNQFELSQFAQMEINTLSDAVEACNIALAKGPKVVLVKHLYCVSDDKFSMLLATPEGCFLAQRPHLTFAQQPVGVGDLISSLFTAGLLKGYSTMRAFQHCHDACYGVLKQTHQLNEWELQTILAQNELVEPSETFPIERLNLNLKTA.

Substrate contacts are provided by residues Ser-9 and 44-45 (TQ). ATP-binding positions include Asp-112, Val-144, Glu-149, Lys-182, and 207-210 (RPHL). Substrate is bound at residue Asp-221.

It belongs to the pyridoxine kinase family. PdxY subfamily. In terms of assembly, homodimer. It depends on Mg(2+) as a cofactor.

It carries out the reaction pyridoxal + ATP = pyridoxal 5'-phosphate + ADP + H(+). Its pathway is cofactor metabolism; pyridoxal 5'-phosphate salvage; pyridoxal 5'-phosphate from pyridoxal: step 1/1. Functionally, pyridoxal kinase involved in the salvage pathway of pyridoxal 5'-phosphate (PLP). Catalyzes the phosphorylation of pyridoxal to PLP. The sequence is that of Pyridoxal kinase PdxY from Photobacterium profundum (strain SS9).